The following is a 265-amino-acid chain: Hydroxyethylthiazole kinase (265 aa).

Substrate is bound at residue M44. K120 and T166 together coordinate ATP. Residue G193 coordinates substrate.

Belongs to the Thz kinase family. Requires Mg(2+) as cofactor.

The catalysed reaction is 5-(2-hydroxyethyl)-4-methylthiazole + ATP = 4-methyl-5-(2-phosphooxyethyl)-thiazole + ADP + H(+). The protein operates within cofactor biosynthesis; thiamine diphosphate biosynthesis; 4-methyl-5-(2-phosphoethyl)-thiazole from 5-(2-hydroxyethyl)-4-methylthiazole: step 1/1. Functionally, catalyzes the phosphorylation of the hydroxyl group of 4-methyl-5-beta-hydroxyethylthiazole (THZ). The sequence is that of Hydroxyethylthiazole kinase from Clostridium novyi (strain NT).